The sequence spans 62 residues: uncharacterized protein (62 aa).

This is an uncharacterized protein from Potato leafroll virus (strain Potato/Scotland/strain 1/1984) (PLrV).